The primary structure comprises 472 residues: Protein c-ets-2-A (472 aa).

In terms of domain architecture, PNT spans 85 to 170 (NTFNGFAKKR…EHLEEMMKEH (86 aa)). A DNA-binding region (ETS) is located at residues 366–446 (IQLWQFLLEL…SGKRYVYRFV (81 aa)).

The protein belongs to the ETS family.

It localises to the nucleus. Its function is as follows. Probable transcription factor. This is Protein c-ets-2-A (ets2-a) from Xenopus laevis (African clawed frog).